The chain runs to 447 residues: GTPase Der (447 aa).

2 EngA-type G domains span residues 4–165 (QIIT…PEEE) and 180–357 (LQIV…KIWN). Residues 10–17 (GRPNVGKS), 57–61 (DTPGL), 119–122 (NKCE), 186–193 (GRPNAGKS), 233–237 (DTAGL), and 298–301 (NKWD) contribute to the GTP site. The region spanning 358–443 (KKITTSKLNE…PIRFTYVKTK (86 aa)) is the KH-like domain.

It belongs to the TRAFAC class TrmE-Era-EngA-EngB-Septin-like GTPase superfamily. EngA (Der) GTPase family. As to quaternary structure, associates with the 50S ribosomal subunit.

GTPase that plays an essential role in the late steps of ribosome biogenesis. The chain is GTPase Der from Rickettsia rickettsii (strain Iowa).